The following is a 468-amino-acid chain: Ubiquitin carboxyl-terminal hydrolase MINDY-1 (468 aa).

Residues 1–19 (MEQPQTENPAPSKATSAET) show a composition bias toward polar residues. The interval 1 to 105 (MEQPQTENPA…RPQELPQSPR (105 aa)) is disordered. Residues 22-41 (SENHEALSGPEKHPQDKDGA) are compositionally biased toward basic and acidic residues. Residues 43 to 54 (ADGAAGEQEPGD) are compositionally biased toward low complexity. The segment covering 68 to 80 (CPPPEASSSPPGP) has biased composition (pro residues). Serine 103 carries the post-translational modification Phosphoserine. Catalysis depends on cysteine 137, which acts as the Nucleophile. Residue histidine 319 is the Proton acceptor of the active site. A ubiquitin-binding domain (UBD) region spans residues 388–427 (QVDQDYLIALSLQQQQQPQGTLGLSDLELAQQLQQEEYQQ). The segment covering 423–432 (EEYQQQQAVQ) has biased composition (low complexity). The segment at 423–468 (EEYQQQQAVQPVRTRAPSPQGRGATSGRPAGERRQRSKTESDCVLL) is disordered. At serine 440 the chain carries Phosphoserine. Positions 452–468 (AGERRQRSKTESDCVLL) are enriched in basic and acidic residues.

The protein belongs to the MINDY deubiquitinase family. FAM63 subfamily.

The catalysed reaction is Thiol-dependent hydrolysis of ester, thioester, amide, peptide and isopeptide bonds formed by the C-terminal Gly of ubiquitin (a 76-residue protein attached to proteins as an intracellular targeting signal).. Functionally, hydrolase that can specifically remove 'Lys-48'-linked conjugated ubiquitin from proteins. Has exodeubiquitinase activity and has a preference for long polyubiquitin chains. May play a regulatory role at the level of protein turnover. This Mus musculus (Mouse) protein is Ubiquitin carboxyl-terminal hydrolase MINDY-1 (Mindy1).